Here is a 941-residue protein sequence, read N- to C-terminus: Isoleucine--tRNA ligase (941 aa).

A 'HIGH' region motif is present at residues 59–69; sequence PYANGNIHIGH. Glutamate 562 contributes to the L-isoleucyl-5'-AMP binding site. Residues 603–607 carry the 'KMSKS' region motif; that stretch reads KMSKS. Residue lysine 606 participates in ATP binding. 4 residues coordinate Zn(2+): cysteine 904, cysteine 907, cysteine 924, and cysteine 927.

Belongs to the class-I aminoacyl-tRNA synthetase family. IleS type 1 subfamily. In terms of assembly, monomer. Zn(2+) is required as a cofactor.

The protein resides in the cytoplasm. It carries out the reaction tRNA(Ile) + L-isoleucine + ATP = L-isoleucyl-tRNA(Ile) + AMP + diphosphate. Catalyzes the attachment of isoleucine to tRNA(Ile). As IleRS can inadvertently accommodate and process structurally similar amino acids such as valine, to avoid such errors it has two additional distinct tRNA(Ile)-dependent editing activities. One activity is designated as 'pretransfer' editing and involves the hydrolysis of activated Val-AMP. The other activity is designated 'posttransfer' editing and involves deacylation of mischarged Val-tRNA(Ile). This chain is Isoleucine--tRNA ligase, found in Haemophilus influenzae (strain PittGG).